Consider the following 1338-residue polypeptide: Apoptotic chromatin condensation inducer in the nucleus (1338 aa).

Residues 1 to 57 (MWGRKRPNSSGETRGILSGNRGVDYGSGRGQSGPFEGRWRKLPKMPEAVGTDPSTSR) are disordered. Residues 72–106 (LQALRVTDLKAALEQRGLAKSGQKSALVKRLKGAL) enclose the SAP domain. 6 positions are modified to phosphoserine: Ser-132, Ser-166, Ser-169, Ser-208, Ser-210, and Ser-216. The disordered stretch occupies residues 155 to 866 (EAREAAELEE…ATQKKPSISI (712 aa)). A compositionally biased stretch (acidic residues) spans 161–171 (ELEEASAESED). Residues 219-228 (EKPRKGERRS) show a composition bias toward basic and acidic residues. Phosphoserine is present on Ser-242. A Phosphothreonine modification is found at Thr-253. A Glycyl lysine isopeptide (Lys-Gly) (interchain with G-Cter in SUMO1) cross-link involves residue Lys-267. The segment covering 269–290 (EEEEEEEEEEEDDDDEEEEEVD) has biased composition (acidic residues). Phosphoserine is present on Ser-295. Residues 313–353 (ERTRAKPEKVVDEKPLNIRSQEKGELEKGGRVTRSQEEARR) show a composition bias toward basic and acidic residues. Lys-318 participates in a covalent cross-link: Glycyl lysine isopeptide (Lys-Gly) (interchain with G-Cter in SUMO2). Phosphoserine occurs at positions 332 and 369. A Glycyl lysine isopeptide (Lys-Gly) (interchain with G-Cter in SUMO2) cross-link involves residue Lys-378. A phosphoserine mark is found at Ser-387, Ser-389, Ser-391, and Ser-413. A phosphothreonine mark is found at Thr-417 and Thr-423. Residues 425 to 434 (EASSPPTHIQ) are compositionally biased toward polar residues. Phosphoserine occurs at positions 454, 477, 479, 491, and 497. A compositionally biased stretch (polar residues) spans 506 to 518 (QKSSLPECSTQKG). Residues 542–559 (ITEEPMKKQSLEQKEGRR) are compositionally biased toward basic and acidic residues. Position 561 is a phosphoserine (Ser-561). Composition is skewed to low complexity over residues 573-603 (SADS…ASRP) and 646-662 (RSAS…GVSR). Residue Lys-654 is modified to N6,N6,N6-trimethyllysine; by EHMT2; alternate. Lys-654 carries the N6,N6-dimethyllysine; by EHMT2; alternate modification. Phosphoserine occurs at positions 655, 657, 710, and 729. Lys-732 is covalently cross-linked (Glycyl lysine isopeptide (Lys-Gly) (interchain with G-Cter in SUMO2)). Residues 744-754 (TQPQTSETQIS) show a composition bias toward polar residues. Composition is skewed to basic and acidic residues over residues 757 to 767 (LESERTHHTVE) and 798 to 815 (NDER…KESS). A phosphoserine mark is found at Ser-825 and Ser-838. Residues 855 to 866 (TAATQKKPSISI) show a composition bias toward polar residues. Lys-861 is subject to N6-acetyllysine; alternate. Residue Lys-861 forms a Glycyl lysine isopeptide (Lys-Gly) (interchain with G-Cter in SUMO2); alternate linkage. Lys-879 is covalently cross-linked (Glycyl lysine isopeptide (Lys-Gly) (interchain with G-Cter in SUMO2)). Residues 892 to 915 (ADDSRISEDETERNGDDGTHDKGL) show a composition bias toward basic and acidic residues. The segment at 892–950 (ADDSRISEDETERNGDDGTHDKGLKICRTVTQVVPAEGQENGQREEEEEKEPEAELPAP) is disordered. A phosphoserine mark is found at Ser-895 and Ser-898. A compositionally biased stretch (acidic residues) spans 936-945 (EEEEEKEPEA). Residue Lys-969 forms a Glycyl lysine isopeptide (Lys-Gly) (interchain with G-Cter in SUMO2) linkage. The residue at position 975 (Thr-975) is a Phosphothreonine. Residues Ser-986, Ser-989, and Ser-1003 each carry the phosphoserine modification. Glycyl lysine isopeptide (Lys-Gly) (interchain with G-Cter in SUMO2) cross-links involve residues Lys-1046 and Lys-1106. Disordered stretches follow at residues 1104–1214 (ETKA…DDLF) and 1226–1338 (LPLT…GGRR). A compositionally biased stretch (pro residues) spans 1115–1129 (PLHPPPPPPVQPPPH). Over residues 1130–1174 (PRAEQREQERAVREQWAEREREMERRERTRSEREWDRDKVREGPR) the composition is skewed to basic and acidic residues. The span at 1175–1192 (SRSRSRDRRRKERAKSKE) shows a compositional bias: basic residues. At Ser-1179 the chain carries Phosphoserine; by SRPK2 and PKB/AKT1. Basic and acidic residues-rich tracts occupy residues 1193-1214 (KKSE…DDLF) and 1236-1317 (KEAE…DRRD). The segment at 1209–1236 (LLDDLFRKTKAAPCIYWLPLTESQIVQK) is sufficient for interaction with RNPS1 and SAP18 and formation of the ASAP complex.

In terms of assembly, found in a mRNA splicing-dependent exon junction complex (EJC). Component of the heterotrimeric ASAP (apoptosis- and splicing-associated protein) complexes consisting of RNPS1, SAP18 and different isoforms of ACIN1; the association of SAP18 seems to require a preformed RNPS1:ACIN1 complex. Interacts with API5. Interacts with SRPK2 in a phosphorylation-dependent manner. Post-translationally, undergoes proteolytic cleavage; the processed form is active, contrary to the uncleaved form. Phosphorylation on Ser-1179 by SRPK2 up-regulates its stimulatory effect on cyclin A1.

The protein localises to the nucleus. It is found in the nucleus speckle. Its subcellular location is the nucleoplasm. Its function is as follows. Auxiliary component of the splicing-dependent multiprotein exon junction complex (EJC) deposited at splice junction on mRNAs. The EJC is a dynamic structure consisting of core proteins and several peripheral nuclear and cytoplasmic associated factors that join the complex only transiently either during EJC assembly or during subsequent mRNA metabolism. Component of the ASAP complexes which bind RNA in a sequence-independent manner and are proposed to be recruited to the EJC prior to or during the splicing process and to regulate specific excision of introns in specific transcription subsets; ACIN1 confers RNA-binding to the complex. The ASAP complex can inhibit RNA processing during in vitro splicing reactions. The ASAP complex promotes apoptosis and is disassembled after induction of apoptosis. Involved in the splicing modulation of BCL2L1/Bcl-X (and probably other apoptotic genes); specifically inhibits formation of proapoptotic isoforms such as Bcl-X(S); the activity is different from the established EJC assembly and function. Induces apoptotic chromatin condensation after activation by CASP3. Regulates cyclin A1, but not cyclin A2, expression in leukemia cells. This Mus musculus (Mouse) protein is Apoptotic chromatin condensation inducer in the nucleus (Acin1).